The primary structure comprises 198 residues: ATP-dependent Clp protease proteolytic subunit (198 aa).

Ser-102 (nucleophile) is an active-site residue. His-127 is a catalytic residue.

The protein belongs to the peptidase S14 family. In terms of assembly, fourteen ClpP subunits assemble into 2 heptameric rings which stack back to back to give a disk-like structure with a central cavity, resembling the structure of eukaryotic proteasomes.

It localises to the cytoplasm. The catalysed reaction is Hydrolysis of proteins to small peptides in the presence of ATP and magnesium. alpha-casein is the usual test substrate. In the absence of ATP, only oligopeptides shorter than five residues are hydrolyzed (such as succinyl-Leu-Tyr-|-NHMec, and Leu-Tyr-Leu-|-Tyr-Trp, in which cleavage of the -Tyr-|-Leu- and -Tyr-|-Trp bonds also occurs).. Its function is as follows. Cleaves peptides in various proteins in a process that requires ATP hydrolysis. Has a chymotrypsin-like activity. Plays a major role in the degradation of misfolded proteins. The protein is ATP-dependent Clp protease proteolytic subunit of Brachyspira hyodysenteriae (strain ATCC 49526 / WA1).